A 715-amino-acid chain; its full sequence is Protein MTSS 2 (715 aa).

The region spanning 1–249 is the IMD domain; sequence METAEKECGA…EQVIKDLKGS (249 aa). Residues 134 to 156 adopt a coiled-coil conformation; sequence HEIKKKSSDTLKLQKKARKGKGD. 3 stretches are compositionally biased toward low complexity: residues 253–274, 284–295, and 312–330; these read WSYQ…SMCS, SSVSSHDSGFVS, and TSQK…TCQS. 3 disordered regions span residues 253 to 405, 420 to 485, and 527 to 562; these read WSYQ…EVSP, LEHQ…RNSN, and IRRT…PTVP. The residue at position 257 (threonine 257) is a Phosphothreonine. A Phosphoserine modification is found at serine 261. The segment covering 331–341 has biased composition (polar residues); sequence VSECSSPTSDW. The span at 360–369 shows a compositional bias: basic and acidic residues; it reads DRVEHLRDTE. Position 404 is a phosphoserine (serine 404). The segment covering 429–442 has biased composition (low complexity); sequence SLQYSSGYSTQTTT. The span at 443–455 shows a compositional bias: polar residues; sequence PSCSEDTIPSQGS. Phosphoserine occurs at positions 542, 564, 575, 587, 597, and 602. Phosphothreonine is present on threonine 606. The interval 661-690 is disordered; that stretch reads FPFPTALSATPSEETPTPPPAATSDPPAED. The WH2 domain occupies 687–704; sequence PAEDMLVAIRRGVRLRRT.

It belongs to the MTSS family. In terms of assembly, interacts (via IMD domain) with RAC1; this interaction may be important to potentiate PDGF-induced RAC1 activation.

The protein resides in the cytoplasm. The protein localises to the cell projection. It is found in the ruffle. Its function is as follows. Involved in plasma membrane dynamics. Potentiated PDGF-mediated formation of membrane ruffles and lamellipodia in fibroblasts, acting via RAC1 activation. May function in actin bundling. The protein is Protein MTSS 2 (Mtss2) of Mus musculus (Mouse).